The following is a 275-amino-acid chain: MPRRAREYPEEGEFVVATVKRIHNYGAFLELDEYPGKEAFMHISEVASTWVRNIRDYLKEGQKVVAKVIRVDPRKGHIDLSLRRVTQQQRKAKLQEFKRAQKAENLLKLAAEKLGKDFETAWREVWVPLEEEWGEVYAAFEDAAKDGIDVLKGHVPDEWLPVLKEIIDNYVEVPTVTIDAEFEITVPKPNGVEIIKEALIRARDRANKEKDVEVKFTYLGAPRYRIDITAPDYYKAEEVLESIAEEILRVIKEAGGEATLLRKEKRIKKVKKRKK.

The S1 motif domain maps to 12–83; the sequence is GEFVVATVKR…RKGHIDLSLR (72 aa).

Belongs to the eIF-2-alpha family. In terms of assembly, heterotrimer composed of an alpha, a beta and a gamma chain.

EIF-2 functions in the early steps of protein synthesis by forming a ternary complex with GTP and initiator tRNA. The sequence is that of Translation initiation factor 2 subunit alpha (eif2a) from Pyrococcus abyssi (strain GE5 / Orsay).